The sequence spans 376 residues: WD repeat-containing protein wdr-5.1 (376 aa).

Polar residues predominate over residues 1 to 24 (MDTSENAASAAEQQPTQQIDQLTV). A disordered region spans residues 1-70 (MDTSENAASA…TPNPNAAGAS (70 aa)). Positions 25–53 (PNAPDGGSSAPAPSTSPNSISPSNPTGTP) are enriched in low complexity. 7 WD repeats span residues 85–115 (GHTK…KIWN), 127–157 (GHKL…KIFE), 169–199 (GHNN…RIWD), 211–241 (AHSD…RIWD), 254–284 (DENP…KLWD), 296–329 (GHEN…YIWN), and 341–373 (GHTQ…HIWR).

The protein belongs to the WD repeat WDR5/wds family. As to quaternary structure, component of the SET2 complex (also known as the SET1/COMPASS complex), which contains at least set-2, swd-2.1, cfp-1, rbbp-5, wdr-5.1, dpy-30 and ash-2. Within the complex, interacts with cfp-1, ash-2, dpy-30 and hda-1. Interacts with histone H3 both unmethylated and methylated at 'Lys-4'. Interacts with jmjd-3.1, ceh-6, sox-2, sem-4 and egl-27. Interacts with set-2. In terms of tissue distribution, enriched in the germline. Detected in all nuclei of the embryo. In larvae, expression is detected in the nuclei of seam cells, somatic gonad precursor cells Z1 and Z4, vulval precursor cells, distal tip cells, hypodermal cells, intestinal and muscle cells. Also detected in the neurons from the ventral nerve cord, head and tail region. Expressed in the head and tail region, intestinal cells, muscle cells, cells of the vulva, spermatheca and sheath cells in adults.

Its subcellular location is the nucleus. Functionally, contributes to histone modification. May position the N-terminus of histone H3 for efficient trimethylation at 'Lys-4'. Required for di- and trimethylation, particularly for the trimethylation at 'Lys-4' of histone H3. Not required for demethylation of histone H3 'Lys-27'. H3 'Lys-4' methylation represents a specific tag for epigenetic transcriptional activation, germline establishment, maintenance and function. Implicated in the epigenetic inheritance of lifespan over several generations. Acts in the germline to limit the longevity of the soma, probably by regulating a lipid metabolism pathway that signals from the germline to the intestine, thereby preventing accumulation of mono-unsaturated fatty acids. Required for RNA interference with probable antagonistic role against hpl-2 function. Plays a role in vulval cell fate specification by acting in the synthetic multivulva pathway independent of set-2. Sex determining protein required in the germline to promote the spermatogenesis to oogenesis switch during the late larval stages of development. Acts with the sex determining factor tra-1, and redundantly with wdr-5.2, to regulate fog-3 expression, which in turn determines germ cell fate. Cooperates with jmjd-3.1, egl-27 and unc-3 to ensure robust transdifferentiation of the Y rectal cell to the PDA motor neuron during larval development. In Caenorhabditis elegans, this protein is WD repeat-containing protein wdr-5.1 (wdr-5.1).